The chain runs to 54 residues: Synaptosomal-associated protein 25 (54 aa).

Belongs to the SNAP-25 family. In terms of assembly, part of the SNARE core complex containing SNAP25, VAMP2 and STX1A; this complex binds CPLX1. Found in a complex containing SYT1, SV2B and syntaxin-1. Found in a ternary complex with STX1A and VAMP8. Interacts with HSC70 and with SYT9, forming a complex with DNAJC5. The interaction with SYT9 is inhibited in presence of calcium. Isoform 1 and isoform 2 interact with BLOC1S6. Interacts with CENPF. Interacts with EQTN. Interacts with HGS. Interacts with KCNB1 (via N-terminus); reduces the voltage-dependent potassium channel KCNB1 activity in pancreatic beta cells. Interacts with OTOF. Interacts with RIMS1. Interacts with SNAPIN. Interacts with STXBP6. Interacts with TRIM9. Interacts with ZDHHC13 (via ANK repeats). Interacts with ZDHHC17 (via ANK repeats). Associates with the BLOC-1 complex. Interacts with PLCL1 (via C2 domain). Interacts with PRRT2; this interaction may impair the formation of the SNARE complex. Interacts with alpha-synuclein/SNCA. Interacts with PRPH2. Interacts with ROM1. Interacts with STX3. The N-terminus is blocked.

The protein localises to the cytoplasm. The protein resides in the perinuclear region. It localises to the cell membrane. It is found in the synapse. Its subcellular location is the synaptosome. The protein localises to the photoreceptor inner segment. In terms of biological role, t-SNARE involved in the molecular regulation of neurotransmitter release. May play an important role in the synaptic function of specific neuronal systems. Associates with proteins involved in vesicle docking and membrane fusion. Regulates plasma membrane recycling through its interaction with CENPF. Modulates the gating characteristics of the delayed rectifier voltage-dependent potassium channel KCNB1 in pancreatic beta cells. This is Synaptosomal-associated protein 25 (SNAP25) from Oryctolagus cuniculus (Rabbit).